The chain runs to 374 residues: Peptide chain release factor 2 (374 aa).

N5-methylglutamine is present on Gln256.

Belongs to the prokaryotic/mitochondrial release factor family. Post-translationally, methylated by PrmC. Methylation increases the termination efficiency of RF2.

The protein localises to the cytoplasm. Functionally, peptide chain release factor 2 directs the termination of translation in response to the peptide chain termination codons UGA and UAA. The sequence is that of Peptide chain release factor 2 from Mycobacterium leprae (strain Br4923).